The following is a 944-amino-acid chain: Nonsense-mediated mRNA decay factor SMG8 (944 aa).

Disordered stretches follow at residues 559–601 (LNNG…SNCC) and 629–654 (ASSE…TDNE). Residues 568-589 (QDEDAEEDEAEEEEGQEQEQPT) are compositionally biased toward acidic residues. Residues 629–640 (ASSEQLLNSEQN) show a composition bias toward polar residues. The span at 641–650 (TTSSGTSSAD) shows a compositional bias: low complexity.

This sequence belongs to the SMG8 family.

In terms of biological role, involved in nonsense-mediated decay (NMD) of mRNAs containing premature stop codons. Probable component of kinase complex containing nonC and recruited to stalled ribosomes. The chain is Nonsense-mediated mRNA decay factor SMG8 from Drosophila melanogaster (Fruit fly).